A 269-amino-acid chain; its full sequence is Regulating synaptic membrane exocytosis protein 4 (269 aa).

A C2 domain is found at 115–233; sequence PMGDVEIGLQ…DLTTLAVGWY (119 aa). Phosphoserine is present on residues serine 254 and serine 257.

In terms of assembly, binds PPFIA3. Does not bind RAB3.

The protein localises to the synapse. Regulates synaptic membrane exocytosis. This is Regulating synaptic membrane exocytosis protein 4 (Rims4) from Mus musculus (Mouse).